A 126-amino-acid chain; its full sequence is Large ribosomal subunit protein bL20 (126 aa).

The protein belongs to the bacterial ribosomal protein bL20 family.

Functionally, binds directly to 23S ribosomal RNA and is necessary for the in vitro assembly process of the 50S ribosomal subunit. It is not involved in the protein synthesizing functions of that subunit. In Frankia casuarinae (strain DSM 45818 / CECT 9043 / HFP020203 / CcI3), this protein is Large ribosomal subunit protein bL20.